The primary structure comprises 148 residues: Ubiquitin-conjugating enzyme E2 8 (148 aa).

Positions 1 to 147 constitute a UBC core domain; sequence MASKRILKEL…ARNWTQKYAM (147 aa). Cysteine 85 functions as the Glycyl thioester intermediate in the catalytic mechanism.

It belongs to the ubiquitin-conjugating enzyme family. In terms of assembly, interacts with CIP8, CHIP, NLA and XERICO. In terms of tissue distribution, highest expression in young stems, old leaves. Lowest levels in floral buds, anthers and young leaves.

It carries out the reaction S-ubiquitinyl-[E1 ubiquitin-activating enzyme]-L-cysteine + [E2 ubiquitin-conjugating enzyme]-L-cysteine = [E1 ubiquitin-activating enzyme]-L-cysteine + S-ubiquitinyl-[E2 ubiquitin-conjugating enzyme]-L-cysteine.. The protein operates within protein modification; protein ubiquitination. In terms of biological role, accepts the ubiquitin from the E1 complex and catalyzes its covalent attachment to other proteins. Mediates the selective degradation of short-lived and abnormal proteins. This chain is Ubiquitin-conjugating enzyme E2 8 (UBC8), found in Arabidopsis thaliana (Mouse-ear cress).